The sequence spans 356 residues: Zinc finger CW-type PWWP domain protein 2 (356 aa).

The CW-type zinc-finger motif lies at 24–79 (MYVNKVWVQCENENCLKWRLLSSEDSAKVDHDEPWYCFMNTDSRYNNCSISEEDFP). 4 residues coordinate Zn(2+): C33, C38, C60, and C71. Residues 98–162 (LGSLVLVKLQ…ATFVGHYSIT (65 aa)) enclose the PWWP domain. Residues 279 to 307 (QALQPTATPDESEEGHGEEINMGEKLSKC) form a disordered region.

In terms of biological role, histone methylation reader which binds to non-methylated (H3K4me0), monomethylated (H3K4me1), dimethylated (H3K4me2) and trimethylated (H3K4me3) 'Lys-4' on histone H3. The order of binding preference is H3K4me3 &gt; H3K4me2 &gt; H3K4me1 &gt; H3K4me0. The polypeptide is Zinc finger CW-type PWWP domain protein 2 (ZCWPW2) (Homo sapiens (Human)).